The sequence spans 356 residues: D-alanine--D-alanine ligase (356 aa).

The ATP-grasp domain maps to 134–339; that stretch reads KQLFEHRGLP…YPELITKLIE (206 aa). ATP is bound at residue 167–222; it reads NDKLNYPVFVKPANLGSSVGISKCNNEAELKEGIKEAFQFDRKLVIEQGVNAREIE. 3 residues coordinate Mg(2+): Asp-293, Glu-306, and Asn-308.

It belongs to the D-alanine--D-alanine ligase family. Mg(2+) serves as cofactor. The cofactor is Mn(2+).

The protein localises to the cytoplasm. The catalysed reaction is 2 D-alanine + ATP = D-alanyl-D-alanine + ADP + phosphate + H(+). Its pathway is cell wall biogenesis; peptidoglycan biosynthesis. In terms of biological role, cell wall formation. This chain is D-alanine--D-alanine ligase, found in Staphylococcus aureus (strain Mu3 / ATCC 700698).